A 65-amino-acid polypeptide reads, in one-letter code: Light-harvesting protein B800/830/1020 alpha-2 chain (65 aa).

Topologically, residues 1–13 (MWKLWKFVDFRMT) are cytoplasmic. Residues 14 to 34 (AVGFHIFFALIAFAVHFACIS) traverse the membrane as a helical segment. Residue His-29 coordinates a bacteriochlorophyll. Residues 35–65 (SERFNWLEGAPAAEYYMDENPGIWKRTSYDG) are Periplasmic-facing.

This sequence belongs to the antenna complex alpha subunit family. As to quaternary structure, the core complex is formed by different alpha and beta chains, binding bacteriochlorophyll molecules, and arranged most probably in tetrameric structures disposed around the reaction center. The non-pigmented gamma chains may constitute additional components.

Its subcellular location is the cell inner membrane. Antenna complexes are light-harvesting systems, which transfer the excitation energy to the reaction centers. This is Light-harvesting protein B800/830/1020 alpha-2 chain from Halorhodospira halochloris (Ectothiorhodospira halochloris).